A 525-amino-acid chain; its full sequence is Beta-galactoside alpha-2,6-sialyltransferase 2 (525 aa).

Residues 1–11 (MKPHLKQWRQR) lie on the Cytoplasmic side of the membrane. The helical; Signal-anchor for type II membrane protein transmembrane segment at 12-32 (MLFAIFVWGLLFLAIFIYFTN) threads the bilayer. The Lumenal portion of the chain corresponds to 33–525 (SNPAAPMPSS…PVTRPNNTNT (493 aa)). Disordered regions lie at residues 85 to 107 (SASP…DGFD) and 145 to 183 (RQGA…PEEA). Disulfide bonds link Cys249/Cys515, Cys292/Cys444, and Cys462/Cys473. 2 N-linked (GlcNAc...) asparagine glycosylation sites follow: Asn303 and Asn333. Asn521 is a glycosylation site (N-linked (GlcNAc...) asparagine).

It belongs to the glycosyltransferase 29 family.

The protein resides in the golgi apparatus. The protein localises to the golgi stack membrane. The enzyme catalyses a beta-D-galactoside + CMP-N-acetyl-beta-neuraminate = an N-acetyl-alpha-neuraminyl-(2-&gt;6)-beta-D-galactosyl derivative + CMP + H(+). Functionally, transfers sialic acid from the donor of substrate CMP-sialic acid to galactose containing acceptor substrates. Has alpha-2,6-sialyltransferase activity toward oligosaccharides that have the Gal-beta-1,4-GlcNAc sequence at the non-reducing end of their carbohydrate groups, but it has weak or no activities toward glycoproteins and glycolipids. This Rattus norvegicus (Rat) protein is Beta-galactoside alpha-2,6-sialyltransferase 2 (St6gal2).